A 346-amino-acid polypeptide reads, in one-letter code: Small ribosomal subunit biogenesis GTPase RsgA (346 aa).

The segment at 1-25 (MAKRKLTQNQTRRIQSNNAKTLHRH) is disordered. A compositionally biased stretch (polar residues) spans 7–20 (TQNQTRRIQSNNAK). One can recognise a CP-type G domain in the interval 103–271 (ENEISRPDYY…LIDSPGIREF (169 aa)). GTP-binding positions include 159 to 162 (NKVD) and 213 to 221 (GQSGVGKSS). Residues Cys295, Cys300, His302, and Cys308 each contribute to the Zn(2+) site.

It belongs to the TRAFAC class YlqF/YawG GTPase family. RsgA subfamily. In terms of assembly, monomer. Associates with 30S ribosomal subunit, binds 16S rRNA. Requires Zn(2+) as cofactor.

The protein localises to the cytoplasm. Its function is as follows. One of several proteins that assist in the late maturation steps of the functional core of the 30S ribosomal subunit. Helps release RbfA from mature subunits. May play a role in the assembly of ribosomal proteins into the subunit. Circularly permuted GTPase that catalyzes slow GTP hydrolysis, GTPase activity is stimulated by the 30S ribosomal subunit. The polypeptide is Small ribosomal subunit biogenesis GTPase RsgA (Haemophilus influenzae (strain ATCC 51907 / DSM 11121 / KW20 / Rd)).